Reading from the N-terminus, the 99-residue chain is Small ribosomal subunit protein eS24 (99 aa).

It belongs to the eukaryotic ribosomal protein eS24 family.

The polypeptide is Small ribosomal subunit protein eS24 (Pyrococcus abyssi (strain GE5 / Orsay)).